The primary structure comprises 238 residues: 7-carboxy-7-deazaguanine synthase (238 aa).

Substrate is bound by residues 14-16 (IQG) and R29. One can recognise a Radical SAM core domain in the interval 20-234 (VVGQKTMFIR…PQLHALVWGN (215 aa)). 3 residues coordinate [4Fe-4S] cluster: C33, C37, and C40. Mg(2+) is bound at residue S42. A substrate-binding site is contributed by S80. S-adenosyl-L-methionine-binding positions include G82 and 126 to 128 (SPK).

Belongs to the radical SAM superfamily. 7-carboxy-7-deazaguanine synthase family. Homodimer. The cofactor is [4Fe-4S] cluster. It depends on S-adenosyl-L-methionine as a cofactor. Requires Mg(2+) as cofactor.

It catalyses the reaction 6-carboxy-5,6,7,8-tetrahydropterin + H(+) = 7-carboxy-7-deazaguanine + NH4(+). The protein operates within purine metabolism; 7-cyano-7-deazaguanine biosynthesis. Functionally, catalyzes the complex heterocyclic radical-mediated conversion of 6-carboxy-5,6,7,8-tetrahydropterin (CPH4) to 7-carboxy-7-deazaguanine (CDG), a step common to the biosynthetic pathways of all 7-deazapurine-containing compounds. The polypeptide is 7-carboxy-7-deazaguanine synthase (Bacillus cereus (strain ATCC 14579 / DSM 31 / CCUG 7414 / JCM 2152 / NBRC 15305 / NCIMB 9373 / NCTC 2599 / NRRL B-3711)).